The sequence spans 354 residues: DNA polymerase IV (354 aa).

The UmuC domain occupies 14–198; that stretch reads IIHIDMDAFF…MDIAKFHGVG (185 aa). Mg(2+) contacts are provided by D18 and D116. The active site involves E117.

It belongs to the DNA polymerase type-Y family. As to quaternary structure, monomer. Mg(2+) serves as cofactor.

It localises to the cytoplasm. The catalysed reaction is DNA(n) + a 2'-deoxyribonucleoside 5'-triphosphate = DNA(n+1) + diphosphate. In terms of biological role, poorly processive, error-prone DNA polymerase involved in untargeted mutagenesis. Copies undamaged DNA at stalled replication forks, which arise in vivo from mismatched or misaligned primer ends. These misaligned primers can be extended by PolIV. Exhibits no 3'-5' exonuclease (proofreading) activity. May be involved in translesional synthesis, in conjunction with the beta clamp from PolIII. This Streptococcus sanguinis (strain SK36) protein is DNA polymerase IV.